The following is a 953-amino-acid chain: MDYKKTLNLPDTPFPMRGDLAKREPAWVAQWEENHVYQAIRAASRGRPRFVLHDGPPYANGDIHIGHAVNKVLKDIIVKSRNMAGYDAHYVPGWDCHGMPIEIQIEKKFGKHLPVTEVQAKARAYALEQIDRQRKDFKRLGVLGEWDRPYLTMNFSNEANEIRALGGILQKGYVFRGLKPVNWCFDCGSALAEAEVEYADRVDPAVDVAFPFADKPGLAAAFGLDSVDDGAVVIWTTTPWTIPANQALNMHPELEYALVRATPAPAHGPLLLLARERVEACLKAWGLQGEVIATAPGAALSGLRFHHPLASADAGYARTSPVYLGDYVTLDAGTGVVHSAPAYGIEDFVSCKAHGLSDDDILNPVLGDGKYADSLPLFGGLSIWDANPRIIEALKAAGSLMDVQKLSHSYMHCWRHKTPIIYRATSQWFAGMDVKPADGGPTLRESALAGIDATAFYPSWGRARLHAMIANRPDWTLSRQRQWGVPMAFFVHKETGALHPRTAELLEQVAQRVEQHGIEAWQSLDPRELLGDEADQYEKNRDTLDVWFDSGTTHATVLGGKDQALGGSHGAELAWPADLYLEGSDQHRGWFHSSLLTGCMLYGQPPYKALLTHGFVVDGQGRKMSKSVGNVIAPQKVSDSLGAEILRLWVASTDYSGELSISDEILKRVVEGYRRIRNTLRFLLANVADFDAVSQAVPYGELFEIDRYALTMTAQMQAEVLAHYERYDFHPAVSRLQTFCSEDLGAFYLDILKDRLYTTAAGSLARRSAQTALLDITQALLKLMAPILSFTAEEAWQVLAQSALQHQADVSRTTIFTEVYHALPPFADADALAAKWARLRAIRAEVQRKLEDVRTAGGIGSSLQAEVDLYAGGDDRALLASLGDDLRFVLIVSRATVHEAQGELRVEITPSAHKKCERCWHWRLDVGSDADHPEICGRCVTNLFGAGEPRDKA.

Residues 57-67 (PYANGDIHIGH) carry the 'HIGH' region motif. Glutamate 582 lines the L-isoleucyl-5'-AMP pocket. The 'KMSKS' region signature appears at 623–627 (KMSKS). Lysine 626 serves as a coordination point for ATP. Residues cysteine 916, cysteine 919, cysteine 936, and cysteine 939 each contribute to the Zn(2+) site.

Belongs to the class-I aminoacyl-tRNA synthetase family. IleS type 1 subfamily. As to quaternary structure, monomer. The cofactor is Zn(2+).

The protein localises to the cytoplasm. The catalysed reaction is tRNA(Ile) + L-isoleucine + ATP = L-isoleucyl-tRNA(Ile) + AMP + diphosphate. In terms of biological role, catalyzes the attachment of isoleucine to tRNA(Ile). As IleRS can inadvertently accommodate and process structurally similar amino acids such as valine, to avoid such errors it has two additional distinct tRNA(Ile)-dependent editing activities. One activity is designated as 'pretransfer' editing and involves the hydrolysis of activated Val-AMP. The other activity is designated 'posttransfer' editing and involves deacylation of mischarged Val-tRNA(Ile). This chain is Isoleucine--tRNA ligase, found in Bordetella petrii (strain ATCC BAA-461 / DSM 12804 / CCUG 43448).